The chain runs to 315 residues: 4-hydroxy-3-methylbut-2-enyl diphosphate reductase (315 aa).

Cys-12 lines the [4Fe-4S] cluster pocket. (2E)-4-hydroxy-3-methylbut-2-enyl diphosphate-binding residues include His-41 and His-74. The dimethylallyl diphosphate site is built by His-41 and His-74. Residues His-41 and His-74 each coordinate isopentenyl diphosphate. Cys-96 serves as a coordination point for [4Fe-4S] cluster. (2E)-4-hydroxy-3-methylbut-2-enyl diphosphate is bound at residue His-124. His-124 serves as a coordination point for dimethylallyl diphosphate. His-124 is an isopentenyl diphosphate binding site. Catalysis depends on Glu-126, which acts as the Proton donor. Thr-168 is a binding site for (2E)-4-hydroxy-3-methylbut-2-enyl diphosphate. A [4Fe-4S] cluster-binding site is contributed by Cys-198. Residues Ser-226, Ser-227, Asn-228, and Ser-270 each coordinate (2E)-4-hydroxy-3-methylbut-2-enyl diphosphate. Residues Ser-226, Ser-227, Asn-228, and Ser-270 each contribute to the dimethylallyl diphosphate site. 4 residues coordinate isopentenyl diphosphate: Ser-226, Ser-227, Asn-228, and Ser-270.

Belongs to the IspH family. The cofactor is [4Fe-4S] cluster.

It carries out the reaction isopentenyl diphosphate + 2 oxidized [2Fe-2S]-[ferredoxin] + H2O = (2E)-4-hydroxy-3-methylbut-2-enyl diphosphate + 2 reduced [2Fe-2S]-[ferredoxin] + 2 H(+). It catalyses the reaction dimethylallyl diphosphate + 2 oxidized [2Fe-2S]-[ferredoxin] + H2O = (2E)-4-hydroxy-3-methylbut-2-enyl diphosphate + 2 reduced [2Fe-2S]-[ferredoxin] + 2 H(+). The protein operates within isoprenoid biosynthesis; dimethylallyl diphosphate biosynthesis; dimethylallyl diphosphate from (2E)-4-hydroxy-3-methylbutenyl diphosphate: step 1/1. It functions in the pathway isoprenoid biosynthesis; isopentenyl diphosphate biosynthesis via DXP pathway; isopentenyl diphosphate from 1-deoxy-D-xylulose 5-phosphate: step 6/6. Functionally, catalyzes the conversion of 1-hydroxy-2-methyl-2-(E)-butenyl 4-diphosphate (HMBPP) into a mixture of isopentenyl diphosphate (IPP) and dimethylallyl diphosphate (DMAPP). Acts in the terminal step of the DOXP/MEP pathway for isoprenoid precursor biosynthesis. The chain is 4-hydroxy-3-methylbut-2-enyl diphosphate reductase from Pseudomonas fluorescens (strain SBW25).